Reading from the N-terminus, the 241-residue chain is Uridylate kinase (241 aa).

ATP is bound at residue 12 to 15; it reads KLSG. The interval 20 to 25 is involved in allosteric activation by GTP; that stretch reads GDKGVG. Residue Gly-54 participates in UMP binding. ATP contacts are provided by Gly-55 and Arg-59. UMP contacts are provided by residues Asp-74 and 135 to 142; that span reads IGSPYFST. Asn-163, Tyr-169, and Asp-172 together coordinate ATP.

Belongs to the UMP kinase family. In terms of assembly, homohexamer.

Its subcellular location is the cytoplasm. It catalyses the reaction UMP + ATP = UDP + ADP. The protein operates within pyrimidine metabolism; CTP biosynthesis via de novo pathway; UDP from UMP (UMPK route): step 1/1. Its activity is regulated as follows. Allosterically activated by GTP. Inhibited by UTP. Catalyzes the reversible phosphorylation of UMP to UDP. The sequence is that of Uridylate kinase from Streptococcus gordonii (strain Challis / ATCC 35105 / BCRC 15272 / CH1 / DL1 / V288).